The primary structure comprises 274 residues: Elongation factor Ts (274 aa).

The interval 79–82 (TDFV) is involved in Mg(2+) ion dislocation from EF-Tu.

Belongs to the EF-Ts family.

The protein localises to the cytoplasm. Its function is as follows. Associates with the EF-Tu.GDP complex and induces the exchange of GDP to GTP. It remains bound to the aminoacyl-tRNA.EF-Tu.GTP complex up to the GTP hydrolysis stage on the ribosome. The polypeptide is Elongation factor Ts (Azobacteroides pseudotrichonymphae genomovar. CFP2).